Consider the following 312-residue polypeptide: DNA-directed RNA polymerase subunit alpha (312 aa).

The alpha N-terminal domain (alpha-NTD) stretch occupies residues methionine 1–threonine 226. The interval asparagine 242 to lysine 312 is alpha C-terminal domain (alpha-CTD).

This sequence belongs to the RNA polymerase alpha chain family. Homodimer. The RNAP catalytic core consists of 2 alpha, 1 beta, 1 beta' and 1 omega subunit. When a sigma factor is associated with the core the holoenzyme is formed, which can initiate transcription.

It carries out the reaction RNA(n) + a ribonucleoside 5'-triphosphate = RNA(n+1) + diphosphate. Functionally, DNA-dependent RNA polymerase catalyzes the transcription of DNA into RNA using the four ribonucleoside triphosphates as substrates. In Streptococcus thermophilus (strain CNRZ 1066), this protein is DNA-directed RNA polymerase subunit alpha.